The sequence spans 1127 residues: Testis-expressed protein 2 (1127 aa).

2 disordered regions span residues 1 to 27 (MTSL…HVQR) and 133 to 279 (AVSP…SFFK). A compositionally biased stretch (low complexity) spans 133 to 187 (AVSPGSSSSGPLASSPSVSSLSEQKTSSSSPLSSPSKSPILSSSASTSTLSSAKP). Phosphoserine is present on Ser196. Residues 249 to 275 (QFTQPRNTGGDSKTAPSSPLTSPSDTR) are compositionally biased toward polar residues. A Phosphothreonine modification is found at Thr262. Ser265, Ser266, Ser270, and Ser295 each carry phosphoserine. The N-linked (GlcNAc...) asparagine glycan is linked to Asn330. The interval 348–386 (EEECDSEGDGYGSDSNIPRSDHPKSTGEPTREIELKSSQ) is disordered. Over residues 366-382 (RSDHPKSTGEPTREIEL) the composition is skewed to basic and acidic residues. 2 helical membrane-spanning segments follow: residues 475 to 495 (TLGF…PHYV) and 497 to 517 (GLFL…WFFT). 4 disordered regions span residues 648 to 685 (KAQT…QRDQ), 715 to 764 (KKSS…QKEL), 786 to 816 (QESR…PPSE), and 947 to 980 (DEES…GYVG). The segment covering 650–670 (QTDKETSEEKPPAEGSEDPKK) has biased composition (basic and acidic residues). Phosphoserine is present on residues Ser732, Ser738, Ser744, Ser748, Ser751, Ser798, and Ser815. Over residues 735–750 (NSPSGHLTHSRSSSKG) the composition is skewed to polar residues. Residues 787–804 (ESRSPQRSPLQSAESSPT) are compositionally biased toward polar residues. The 286-residue stretch at 816-1101 (EEEEQEAWVN…MPNMDDVYIT (286 aa)) folds into the SMP-LTD domain. The span at 947–962 (DEESSSAGSSEEDDAP) shows a compositional bias: acidic residues.

The protein localises to the endoplasmic reticulum membrane. Its subcellular location is the nucleus membrane. In terms of biological role, during endoplasmic reticulum (ER) stress or when cellular ceramide levels increase, may induce contacts between the ER and medial-Golgi complex to facilitate non-vesicular transport of ceramides from the ER to the Golgi complex where they are converted to complex sphingolipids, preventing toxic ceramide accumulation. This Homo sapiens (Human) protein is Testis-expressed protein 2 (TEX2).